We begin with the raw amino-acid sequence, 1026 residues long: Multidrug resistance protein MdtC (1026 aa).

11 helical membrane passes run 15 to 35, 333 to 353, 360 to 380, 387 to 407, 431 to 451, 463 to 483, 528 to 548, 853 to 873, 897 to 917, 953 to 973, and 984 to 1004; these read ILIA…LPVA, EVEE…FLFL, LIPA…MYLC, LSLM…IVVL, VGFT…PLLL, FAVT…TLTP, LVGV…IAIP, LILI…LYES, LFNA…IGIV, PIMM…LSDG, and ITIV…TPVV.

Belongs to the resistance-nodulation-cell division (RND) (TC 2.A.6) family. MdtC subfamily. In terms of assembly, part of a tripartite efflux system composed of MdtA, MdtB and MdtC. MdtC forms a heteromultimer with MdtB.

It localises to the cell inner membrane. In Salmonella paratyphi B (strain ATCC BAA-1250 / SPB7), this protein is Multidrug resistance protein MdtC.